Consider the following 393-residue polypeptide: Biotin synthase, mitochondrial (393 aa).

Residues 1 to 20 constitute a mitochondrion transit peptide; that stretch reads MSVSFTRSFPRAFIRSYGTV. Positions 81–310 constitute a Radical SAM core domain; that stretch reads SAIQMCTLMN…ATIVRLAAGR (230 aa). Residues Cys96, Cys100, and Cys103 each contribute to the [4Fe-4S] cluster site. [2Fe-2S] cluster-binding residues include Cys140, Cys173, Cys233, and Arg305. A disordered region spans residues 366-393; it reads NAATPQQHVDSVAHESEKNPAAPAAEAL.

The protein belongs to the radical SAM superfamily. Biotin synthase family. Requires [4Fe-4S] cluster as cofactor. [2Fe-2S] cluster is required as a cofactor.

It is found in the mitochondrion. It carries out the reaction (4R,5S)-dethiobiotin + (sulfur carrier)-SH + 2 reduced [2Fe-2S]-[ferredoxin] + 2 S-adenosyl-L-methionine = (sulfur carrier)-H + biotin + 2 5'-deoxyadenosine + 2 L-methionine + 2 oxidized [2Fe-2S]-[ferredoxin]. It functions in the pathway cofactor biosynthesis; biotin biosynthesis; biotin from 7,8-diaminononanoate: step 2/2. Its function is as follows. Biotin synthase; part of the cluster involved in the biosynthesis of biotin (also known as vitamin B8 or vitamin H), a water-soluble vitamin that functions as a prosthetic group of many carboxylases, such as acetyl-CoA carboxylase and pyruvate carboxylase. Catalyzes the conversion of dethiobiotin (DTB) to biotin by the insertion of a sulfur atom into dethiobiotin via a radical-based mechanism. This chain is Biotin synthase, mitochondrial, found in Emericella nidulans (strain FGSC A4 / ATCC 38163 / CBS 112.46 / NRRL 194 / M139) (Aspergillus nidulans).